The chain runs to 842 residues: Probable cleavage and polyadenylation specificity factor subunit 2 (842 aa).

The span at 414–425 (AEETRIRMERAR) shows a compositional bias: basic and acidic residues. Disordered stretches follow at residues 414 to 442 (AEETRIRMERARRQAQANESDDSDDDDIA) and 708 to 747 (METFQDDQNKQEASEENVAEGEKSNGQSKENDENASSIPI). Over residues 432–441 (ESDDSDDDDI) the composition is skewed to acidic residues. Residues 731–747 (SNGQSKENDENASSIPI) show a composition bias toward polar residues.

Belongs to the metallo-beta-lactamase superfamily. RNA-metabolizing metallo-beta-lactamase-like family. CPSF2/YSH1 subfamily. In terms of assembly, CPSF is a heterotetramer composed of four distinct subunits 160, 100, 70 and 30 kDa.

The protein resides in the nucleus. Functionally, CPSF plays a key role in pre-mRNA 3'-end formation, recognizing the AAUAAA signal sequence and interacting with poly(A)polymerase and other factors to bring about cleavage and poly(A) addition. The protein is Probable cleavage and polyadenylation specificity factor subunit 2 of Caenorhabditis briggsae.